The sequence spans 323 residues: Protease Do-like 5, chloroplastic (323 aa).

A chloroplast-targeting transit peptide spans 1–28 (MTMALASSKAFSSIFNTLSPINQSKFVL). Residues 29–73 (ACSGSNHVDVIDRRRRIMIFGSSLALTSSLLGSNQQRLPMESAIA) constitute a thylakoid transit peptide. Catalysis depends on charge relay system residues histidine 147, aspartate 188, and serine 266. Residues 186–283 (DNDLAVLKIE…YGHTIGVNTA (98 aa)) are serine protease.

It belongs to the peptidase S1C family.

The protein localises to the plastid. The protein resides in the chloroplast thylakoid lumen. Functionally, probable serine protease. The sequence is that of Protease Do-like 5, chloroplastic (DEGP5) from Arabidopsis thaliana (Mouse-ear cress).